The primary structure comprises 444 residues: Ribulose bisphosphate carboxylase (444 aa).

Lys-163 functions as the Proton acceptor in the catalytic mechanism. Lys-165 contacts substrate. Lys-189, Asp-191, and Glu-192 together coordinate Mg(2+). At Lys-189 the chain carries N6-carboxylysine. His-281 (proton acceptor) is an active-site residue. Substrate-binding positions include Arg-282, His-314, 367–369 (SGG), and 389–392 (QLGG).

This sequence belongs to the RuBisCO large chain family. Type III subfamily. In terms of assembly, homodecamer, consisting of five dimer units which form a ring-like pentagonal structure. This arrangement is essential for its high thermostability. In contrast to form I RuBisCO, the form III RuBisCO is composed solely of large subunits. Mg(2+) is required as a cofactor.

The enzyme catalyses 2 (2R)-3-phosphoglycerate + 2 H(+) = D-ribulose 1,5-bisphosphate + CO2 + H2O. It catalyses the reaction D-ribulose 1,5-bisphosphate + O2 = 2-phosphoglycolate + (2R)-3-phosphoglycerate + 2 H(+). Catalyzes the addition of molecular CO(2) and H(2)O to ribulose 1,5-bisphosphate (RuBP), generating two molecules of 3-phosphoglycerate (3-PGA). Functions in an archaeal AMP degradation pathway, together with AMP phosphorylase and R15P isomerase. This is Ribulose bisphosphate carboxylase from Thermococcus kodakarensis (strain ATCC BAA-918 / JCM 12380 / KOD1) (Pyrococcus kodakaraensis (strain KOD1)).